A 797-amino-acid polypeptide reads, in one-letter code: Protocadherin-3 (797 aa).

A signal peptide spans 1–30 (METALAKIPQQRQVFFLTILSLLWKSSSEA). At 31–691 (IRYSMPEETE…DNYDVLTLYL (661 aa)) the chain is on the extracellular side. 5 consecutive Cadherin domains span residues 35 to 133 (MPEE…SPEF), 138 to 242 (MLLT…SPQF), 247 to 346 (YKVQ…APEL), 351 to 450 (LTVL…APAF), and 455 to 560 (YTMF…APFV). Asn169, Asn276, and Asn417 each carry an N-linked (GlcNAc...) asparagine glycan. N-linked (GlcNAc...) asparagine glycosylation occurs at Asn566. The 104-residue stretch at 567 to 670 (ASAPCTELLP…VVDGFSQPYL (104 aa)) folds into the Cadherin 6 domain. Residues 692–712 (VIALASVSSLFLLSVVLFVGV) traverse the membrane as a helical segment. Topologically, residues 713–797 (RLCRRAREAS…AVVHNSVGFY (85 aa)) are cytoplasmic.

In terms of tissue distribution, expressed in brain.

Its subcellular location is the cell membrane. Its function is as follows. Potential calcium-dependent cell-adhesion protein. May be involved in the establishment and maintenance of specific neuronal connections in the brain. The polypeptide is Protocadherin-3 (Pcdh3) (Rattus norvegicus (Rat)).